Reading from the N-terminus, the 618-residue chain is Sphingomyelin phosphodiesterase 2 (618 aa).

Positions 1 to 22 are cleaved as a signal peptide; the sequence is MQQPLIILGIGIVLALVSNVES. The Saposin B-type domain maps to 68–151; that stretch reads RKMSCLFCTF…AFIANCGHSD (84 aa). 3 cysteine pairs are disulfide-bonded: Cys72–Cys147, Cys75–Cys140, and Cys103–Cys114. Asn89 carries N-linked (GlcNAc...) asparagine glycosylation. Asn159 carries N-linked (GlcNAc...) asparagine glycosylation. Zn(2+) is bound by residues Asp189 and His191. Intrachain disulfides connect Cys204–Cys216 and Cys217–Cys249. Asp278 lines the Zn(2+) pocket. Asn298 is a glycosylation site (N-linked (GlcNAc...) asparagine). Residues Asn318, His427, His461, and His463 each contribute to the Zn(2+) site. Residues Cys387 and Cys435 are joined by a disulfide bond. 2 N-linked (GlcNAc...) asparagine glycosylation sites follow: Asn525 and Asn568. Cystine bridges form between Cys588–Cys594 and Cys600–Cys613.

This sequence belongs to the acid sphingomyelinase family. Requires Zn(2+) as cofactor.

It is found in the secreted. It carries out the reaction a sphingomyelin + H2O = phosphocholine + an N-acylsphing-4-enine + H(+). It catalyses the reaction an N-acyl-15-methylhexadecasphing-4-enine-1-phosphocholine + H2O = an N-acyl-15-methylhexadecasphing-4-enine + phosphocholine + H(+). It functions in the pathway lipid metabolism; sphingolipid metabolism. Its function is as follows. Sphingomyelin phosphodiesterase (sphingomyelinase) that converts sphingomyelin (N-acyl-sphingoid-1-phosphocholine) to ceramide (N-acyl-sphingoid base) and phosphocholine at acidic pH. Displays its enzymatic activity when secreted. May play distinct roles in signaling. This chain is Sphingomyelin phosphodiesterase 2 (asm-2), found in Caenorhabditis elegans.